The sequence spans 409 residues: Failed axon connections homolog (409 aa).

The helical transmembrane segment at 68-88 (YLTGGALLAAAAYLLHELLVI) threads the bilayer. The interval 372-409 (DEGAENSFSRTPDTDFTGHSLFDSDVDMDDYTEHEQCK) is disordered.

The protein belongs to the FAX family.

Its subcellular location is the membrane. May play a role in axonal development. The sequence is that of Failed axon connections homolog (Faxc) from Rattus norvegicus (Rat).